The sequence spans 512 residues: ATP synthase subunit alpha 2 (512 aa).

An ATP-binding site is contributed by 169–176 (GDRQTGKT).

This sequence belongs to the ATPase alpha/beta chains family. As to quaternary structure, F-type ATPases have 2 components, CF(1) - the catalytic core - and CF(0) - the membrane proton channel. CF(1) has five subunits: alpha(3), beta(3), gamma(1), delta(1), epsilon(1). CF(0) has three main subunits: a(1), b(2) and c(9-12). The alpha and beta chains form an alternating ring which encloses part of the gamma chain. CF(1) is attached to CF(0) by a central stalk formed by the gamma and epsilon chains, while a peripheral stalk is formed by the delta and b chains.

The protein localises to the cell inner membrane. It carries out the reaction ATP + H2O + 4 H(+)(in) = ADP + phosphate + 5 H(+)(out). In terms of biological role, produces ATP from ADP in the presence of a proton gradient across the membrane. The alpha chain is a regulatory subunit. The sequence is that of ATP synthase subunit alpha 2 from Vibrio campbellii (strain ATCC BAA-1116).